Consider the following 600-residue polypeptide: Elongation factor 4 (600 aa).

Residues 5 to 187 form the tr-type G domain; the sequence is KYIRNFSIIA…AIVNKLHPPK (183 aa). GTP contacts are provided by residues 17–22 and 134–137; these read DHGKST and NKID.

Belongs to the TRAFAC class translation factor GTPase superfamily. Classic translation factor GTPase family. LepA subfamily.

The protein resides in the cell inner membrane. It carries out the reaction GTP + H2O = GDP + phosphate + H(+). In terms of biological role, required for accurate and efficient protein synthesis under certain stress conditions. May act as a fidelity factor of the translation reaction, by catalyzing a one-codon backward translocation of tRNAs on improperly translocated ribosomes. Back-translocation proceeds from a post-translocation (POST) complex to a pre-translocation (PRE) complex, thus giving elongation factor G a second chance to translocate the tRNAs correctly. Binds to ribosomes in a GTP-dependent manner. This is Elongation factor 4 from Rickettsia akari (strain Hartford).